Here is a 703-residue protein sequence, read N- to C-terminus: MTFNEKCVEAQVGNMNVKISTGKMAKQASGAVVISSGDTMVLVTVVGTKEAKPGQDFFPLTVNYTEKTYAGGKIPGSFFKREGRPSEDETLICRLIDRPIRPLFPESYLCDTQVMATVISAEEDHDPAILSMIGASAALMISDIPFEGPIAGVKVGRVDGKLIANPSAEQLKLSDLEIVVAAGKDAIFMVEGEADFVSEEDLLEAVFFAKDAVQGILAAQEELARQVGVAKREVAPLVVDEALKAKVKALAFDRIAQAFKIKAKQERYAAVAQIKEEVVAALAEEFEGRDKEIKGFIGDIEYDRMRHDVLETGIRIDGRDTKTVRPIAIEAGLLPRAHGSTLFTRGETQVLAAATLGTSQDEQRMDSLYGEYRKKFMLHYNFPPFSVGETSFRLAPGRREIGHGMLAERAISAILPNHDDFPYTIRIVAETLESNGSSSMATVCGGCLSLMDAGVPVKAPVAGIAMGLIKEGEKVAILTDILGDEDHLGDMDFKVAGSADGVTALQMDIKIGGVSKEIMQQALKQAKEGRLHILGKMAQCLAAPREEMSAFAPRITTIWIKPDRIRDVIGTGGKTIRSITEATGVMIDIDSDNSGKINIASSDKAACDAAIQMIRGLTDEVEEGKLYMGTVKKIMEFGAFVEVLPGTDGLVHISELDETRVKNVTDILNEGDKVLVKCIGVDKQGKIKLSRKAALGQSLEEKD.

Positions 486 and 492 each coordinate Mg(2+). The region spanning 553–614 (PRITTIWIKP…AACDAAIQMI (62 aa)) is the KH domain. The S1 motif domain occupies 624–692 (GKLYMGTVKK…KQGKIKLSRK (69 aa)).

This sequence belongs to the polyribonucleotide nucleotidyltransferase family. Requires Mg(2+) as cofactor.

It localises to the cytoplasm. The catalysed reaction is RNA(n+1) + phosphate = RNA(n) + a ribonucleoside 5'-diphosphate. Involved in mRNA degradation. Catalyzes the phosphorolysis of single-stranded polyribonucleotides processively in the 3'- to 5'-direction. The chain is Polyribonucleotide nucleotidyltransferase from Trichlorobacter lovleyi (strain ATCC BAA-1151 / DSM 17278 / SZ) (Geobacter lovleyi).